The sequence spans 156 residues: Transcription inhibitor protein Gfh1 (156 aa).

Residues 1 to 74 are a coiled coil; it reads MAREVKLTKA…LEDILSRAVI (74 aa). Zn(2+) contacts are provided by E20 and E24.

The protein belongs to the GreA/GreB family. As to quaternary structure, interacts with RNAP.

Its function is as follows. Inhibits all catalytic activities of RNA polymerase (RNAP) by partially occluding its substrate-binding site and preventing NTP binding. This chain is Transcription inhibitor protein Gfh1 (gfh1), found in Thermus thermophilus (strain ATCC 27634 / DSM 579 / HB8).